Consider the following 85-residue polypeptide: Small ribosomal subunit protein bS20 (85 aa).

This sequence belongs to the bacterial ribosomal protein bS20 family.

Its function is as follows. Binds directly to 16S ribosomal RNA. The sequence is that of Small ribosomal subunit protein bS20 from Borrelia hermsii (strain HS1 / DAH).